Reading from the N-terminus, the 367-residue chain is tRNA-specific 2-thiouridylase MnmA (367 aa).

ATP is bound by residues 13 to 20 (GLSGGVDS) and Met-39. Positions 99–101 (NPD) are interaction with target base in tRNA. Catalysis depends on Cys-104, which acts as the Nucleophile. Cysteines 104 and 200 form a disulfide. Gly-128 provides a ligand contact to ATP. The interaction with tRNA stretch occupies residues 150–152 (KDQ). The Cysteine persulfide intermediate role is filled by Cys-200. Residues 307–308 (RY) are interaction with tRNA.

This sequence belongs to the MnmA/TRMU family.

The protein localises to the cytoplasm. The enzyme catalyses S-sulfanyl-L-cysteinyl-[protein] + uridine(34) in tRNA + AH2 + ATP = 2-thiouridine(34) in tRNA + L-cysteinyl-[protein] + A + AMP + diphosphate + H(+). Catalyzes the 2-thiolation of uridine at the wobble position (U34) of tRNA, leading to the formation of s(2)U34. This Neisseria gonorrhoeae (strain ATCC 700825 / FA 1090) protein is tRNA-specific 2-thiouridylase MnmA.